A 605-amino-acid chain; its full sequence is Dolichyl-diphosphooligosaccharide--protein glycosyltransferase subunit 1 (605 aa).

The first 22 residues, 1 to 22 (MEAPIVLLLLLWLALAPTPGSA), serve as a signal peptide directing secretion. Residues 23-437 (SSEAPPLVNE…FNKVLMLQEP (415 aa)) lie on the Lumenal side of the membrane. An N6-acetyllysine modification is found at Lys-185. Asn-297 carries an N-linked (GlcNAc...) asparagine glycan. A helical transmembrane segment spans residues 438–455 (LLVVAAFYILFFTVIIYV). Topologically, residues 456–605 (RLDFSITKDP…TKIDHILDAL (150 aa)) are cytoplasmic. An N6-acetyllysine; alternate modification is found at Lys-536. Residue Lys-536 forms a Glycyl lysine isopeptide (Lys-Gly) (interchain with G-Cter in SUMO2); alternate linkage.

This sequence belongs to the OST1 family. In terms of assembly, component of the oligosaccharyltransferase (OST) complex. OST exists in two different complex forms which contain common core subunits RPN1, RPN2, OST48, OST4, DAD1 and TMEM258, either STT3A or STT3B as catalytic subunits, and form-specific accessory subunits. STT3A complex assembly occurs through the formation of 3 subcomplexes. Subcomplex 1 contains RPN1 and TMEM258, subcomplex 2 contains the STT3A-specific subunits STT3A, DC2/OSTC, and KCP2 as well as the core subunit OST4, and subcomplex 3 contains RPN2, DAD1, and OST48. The STT3A complex can form stable complexes with the Sec61 complex or with both the Sec61 and TRAP complexes. Interacts with TMEM35A/NACHO. Ubiquitinated by the ECS(ASB11) complex. Post-translationally, ufmylated by UFL1 in response to endoplasmic reticulum stress, promoting reticulophagy of endoplasmic reticulum sheets. As to expression, expressed in all tissues tested.

The protein localises to the endoplasmic reticulum membrane. The protein operates within protein modification; protein glycosylation. Functionally, subunit of the oligosaccharyl transferase (OST) complex that catalyzes the initial transfer of a defined glycan (Glc(3)Man(9)GlcNAc(2) in eukaryotes) from the lipid carrier dolichol-pyrophosphate to an asparagine residue within an Asn-X-Ser/Thr consensus motif in nascent polypeptide chains, the first step in protein N-glycosylation. N-glycosylation occurs cotranslationally and the complex associates with the Sec61 complex at the channel-forming translocon complex that mediates protein translocation across the endoplasmic reticulum (ER). All subunits are required for a maximal enzyme activity. The polypeptide is Dolichyl-diphosphooligosaccharide--protein glycosyltransferase subunit 1 (Rattus norvegicus (Rat)).